Reading from the N-terminus, the 1112-residue chain is cGMP-inhibited 3',5'-cyclic phosphodiesterase 3B (1112 aa).

Over residues 1–10 (MRRDERDAKA) the composition is skewed to basic and acidic residues. The segment at 1–25 (MRRDERDAKAMRSLQPPDGAGSPPE) is interaction with RAPGEF3. The tract at residues 1–26 (MRRDERDAKAMRSLQPPDGAGSPPES) is disordered. Ser13 bears the Phosphoserine mark. A run of 6 helical transmembrane segments spans residues 88–108 (FVLALLLGAEPESWAAGAAWL), 117–137 (HSLSPLFSIACAFFFLTCFLT), 152–172 (WWLLALPACCYLGDFLVWQWW), 192–212 (AAAGRLLLVLSCVGLLLTLAH), 220–240 (VLVLLLASFVWWVSFTSLGSL), and 247–267 (LLSGLVGGAGCLLALGLDHFF). At Ser295 the chain carries Phosphoserine; by PKB/AKT1 or PKB/AKT2. Phosphoserine occurs at positions 296 and 442. The tract at residues 418–471 (EKGDRKLNKGLNRNSLPTPQLRRSSGTSGLLPVEQSSRWDRNNGKRPHQEFGIS) is disordered. Polar residues predominate over residues 428 to 445 (LNRNSLPTPQLRRSSGTS). Residues 436 to 460 (PQLRRSSGTSGLLPVEQSSRWDRNN) are interaction with PIK3R6. Over residues 454–466 (SRWDRNNGKRPHQ) the composition is skewed to basic and acidic residues. In terms of domain architecture, PDEase spans 651-1079 (TNIEQEVSLD…KIWKEIVEEE (429 aa)). His737 serves as the catalytic Proton donor. His737 contributes to the AMP binding site. Mg(2+) is bound by residues His741, His821, Asp822, and Asp937. AMP-binding residues include Asp822, Asp937, and Gln988. Composition is skewed to acidic residues over residues 1017-1041 (EEDNDTESGDDEDGEELDTEDEEME) and 1103-1112 (QVIEEADEEE). 2 disordered regions span residues 1017-1051 (EEDNDTESGDDEDGEELDTEDEEMENNLNPKPPRR) and 1092-1112 (ENSSLPQADEIQVIEEADEEE).

Belongs to the cyclic nucleotide phosphodiesterase family. PDE3 subfamily. Homodimer. Interacts with PIK3CG; regulates PDE3B activity and thereby cAMP levels in cells. Interacts with RAPGEF3 and PIK3R6; form a signaling complex that regulates phosphatidylinositol 3-kinase gamma in angiogenesis. Interacts with ABHD15; this interaction regulates PDE3B's stability and expression and, thereby, impacts the antilipolytic action of insulin. It depends on Mg(2+) as a cofactor. Requires Mn(2+) as cofactor. Post-translationally, phosphorylation at Ser-295 mediates insulin-induced activation of PDE3B. In terms of tissue distribution, abundant in adipose tissues.

The protein resides in the membrane. It carries out the reaction a nucleoside 3',5'-cyclic phosphate + H2O = a nucleoside 5'-phosphate + H(+). The enzyme catalyses 3',5'-cyclic AMP + H2O = AMP + H(+). It catalyses the reaction 3',5'-cyclic GMP + H2O = GMP + H(+). With respect to regulation, inhibited by cGMP. Cyclic nucleotide phosphodiesterase with a dual-specificity for the second messengers cAMP and cGMP, which are key regulators of many important physiological process. Regulates angiogenesis by inhibiting the cAMP-dependent guanine nucleotide exchange factor RAPGEF3 and downstream phosphatidylinositol 3-kinase gamma-mediated signaling. Controls cardiac contractility by reducing cAMP concentration in cardiocytes. The protein is cGMP-inhibited 3',5'-cyclic phosphodiesterase 3B of Homo sapiens (Human).